Here is a 226-residue protein sequence, read N- to C-terminus: uncharacterized protein (226 aa).

This sequence belongs to the mimivirus L246/L426 family.

This is an uncharacterized protein from Acanthamoeba polyphaga mimivirus (APMV).